A 676-amino-acid chain; its full sequence is Vitamin K-dependent protein S (676 aa).

Positions 1–24 (MRVLGGRCGALLACLLLVLPVSEA) are cleaved as a signal peptide. Residues 25-41 (NFLSKQQASQVLVRKRR) constitute a propeptide that is removed on maturation. A Gla domain is found at 42–87 (ANSLLEETKQGNLERECIEELCNKEEAREVFENDPETDYFYPKYLV). 4-carboxyglutamate occurs at positions 47, 48, 55, 57, 60, 61, 66, 67, 70, 73, and 77. Residues Cys-58 and Cys-63 are joined by a disulfide bond. A thrombin-sensitive region spans residues 88–116 (CLRSFQTGLFTAARQSTNAYPDLRSCVNA). The region spanning 117–155 (IPDQCSPLPCNEDGYMSCKDGKASFTCTCKPGWQGEKCE) is the EGF-like 1 domain. Intrachain disulfides connect Cys-121-Cys-134, Cys-126-Cys-143, Cys-145-Cys-154, Cys-161-Cys-175, Cys-171-Cys-184, Cys-186-Cys-199, Cys-205-Cys-217, Cys-212-Cys-226, Cys-228-Cys-241, Cys-247-Cys-256, Cys-252-Cys-265, Cys-267-Cys-282, and Cys-449-Cys-475. Asp-136 carries the (3R)-3-hydroxyaspartate modification. Residues 157–200 (DINECKDPSNINGGCSQICDNTPGSYHCSCKNGFVMLSNKKDCK) form the EGF-like 2; calcium-binding domain. An EGF-like 3; calcium-binding domain is found at 201 to 242 (DVDECSLKPSICGTAVCKNIPGDFECECPEGYRYNLKSKSCE). The EGF-like 4; calcium-binding domain maps to 243–283 (DIDECSENMCAQLCVNYPGGYTCYCDGKKGFKLAQDQKSCE). 2 consecutive Laminin G-like domains span residues 299–475 (LLYL…NKHC) and 484–666 (YYPG…AHSC). N-linked (GlcNAc...) asparagine glycosylation is found at Asn-499, Asn-509, and Asn-530. An intrachain disulfide couples Cys-639 to Cys-666.

The iron and 2-oxoglutarate dependent 3-hydroxylation of aspartate and asparagine is (R) stereospecific within EGF domains. As to expression, plasma.

It is found in the secreted. Functionally, anticoagulant plasma protein; it is a cofactor to activated protein C in the degradation of coagulation factors Va and VIIIa. It helps to prevent coagulation and stimulating fibrinolysis. In Homo sapiens (Human), this protein is Vitamin K-dependent protein S (PROS1).